The following is a 247-amino-acid chain: Adenosylcobinamide-GDP ribazoletransferase (247 aa).

The next 5 membrane-spanning stretches (helical) occupy residues 34–54, 59–79, 113–133, 138–158, and 187–207; these read IVMFPFIGLILGGVSGLIFIL, CGIPLAALFCILALALLTGGF, GGLALIFVLLAKILVVSELAL, MLAALAAACAAGRGSAVLLMY, and LAVIVATVLLPGMQGLAAMVV.

This sequence belongs to the CobS family. Requires Mg(2+) as cofactor.

The protein resides in the cell inner membrane. It catalyses the reaction alpha-ribazole + adenosylcob(III)inamide-GDP = adenosylcob(III)alamin + GMP + H(+). It carries out the reaction alpha-ribazole 5'-phosphate + adenosylcob(III)inamide-GDP = adenosylcob(III)alamin 5'-phosphate + GMP + H(+). It functions in the pathway cofactor biosynthesis; adenosylcobalamin biosynthesis; adenosylcobalamin from cob(II)yrinate a,c-diamide: step 7/7. In terms of biological role, joins adenosylcobinamide-GDP and alpha-ribazole to generate adenosylcobalamin (Ado-cobalamin). Also synthesizes adenosylcobalamin 5'-phosphate from adenosylcobinamide-GDP and alpha-ribazole 5'-phosphate. The sequence is that of Adenosylcobinamide-GDP ribazoletransferase from Salmonella dublin (strain CT_02021853).